Here is a 308-residue protein sequence, read N- to C-terminus: N-acetylneuraminate lyase (308 aa).

2 residues coordinate aceneuramate: threonine 50 and threonine 51. Residue tyrosine 142 is the Proton donor of the active site. Lysine 172 acts as the Schiff-base intermediate with substrate in catalysis. Aceneuramate is bound by residues serine 174, glycine 198, aspartate 200, glutamate 201, and serine 217.

This sequence belongs to the DapA family. NanA subfamily. As to quaternary structure, homotetramer.

The protein resides in the cytoplasm. The enzyme catalyses aceneuramate = aldehydo-N-acetyl-D-mannosamine + pyruvate. It participates in amino-sugar metabolism; N-acetylneuraminate degradation. Its function is as follows. Catalyzes the cleavage of N-acetylneuraminic acid (sialic acid) to form pyruvate and N-acetylmannosamine via a Schiff base intermediate. It prevents sialic acids from being recycled and returning to the cell surface. Involved in the N-glycolylneuraminic acid (Neu5Gc) degradation pathway. The chain is N-acetylneuraminate lyase from Gallus gallus (Chicken).